Consider the following 473-residue polypeptide: Serine palmitoyltransferase 1 (473 aa).

The Lumenal segment spans residues 1 to 15 (MATATEQWVLVEMVQ). An interaction with SPTLC2 region spans residues 1-66 (MATATEQWVL…KEELIEEWQP (66 aa)). The chain crosses the membrane as a helical span at residues 16-36 (ALYEAPAYHLILEGILILWII). The Cytoplasmic portion of the chain corresponds to 37–473 (RLLFSKTYKL…IKEVAQAVLL (437 aa)). Phosphotyrosine; by ABL is present on Tyr-164.

It belongs to the class-II pyridoxal-phosphate-dependent aminotransferase family. In terms of assembly, component of the serine palmitoyltransferase (SPT) complex, which is also composed of SPTLC2 or SPTLC3 and SPTSSA or SPTSSB. The heterodimer with SPTLC2 or SPTLC3 forms the catalytic core of the enzyme, while SPTSSA or SPTSSB subunits determine substrate specificity. SPT also interacts with ORMDL proteins, especially ORMDL3, which negatively regulate SPT activity in the presence of ceramides. Forms dimers of heterodimers with SPTLC2. Interacts with RTN4. Pyridoxal 5'-phosphate serves as cofactor. Post-translationally, phosphorylation at Tyr-164 inhibits activity and promotes cell survival.

Its subcellular location is the endoplasmic reticulum membrane. It catalyses the reaction L-serine + hexadecanoyl-CoA + H(+) = 3-oxosphinganine + CO2 + CoA. It carries out the reaction octadecanoyl-CoA + L-serine + H(+) = 3-oxoeicosasphinganine + CO2 + CoA. The catalysed reaction is tetradecanoyl-CoA + L-serine + H(+) = 3-oxohexadecasphinganine + CO2 + CoA. The enzyme catalyses dodecanoyl-CoA + L-serine + H(+) = 3-oxotetradecasphinganine + CO2 + CoA. It functions in the pathway lipid metabolism; sphingolipid metabolism. SPT complex catalytic activity is negatively regulated by ORMDL proteins, including ORMDL3, in the presence of ceramides. This mechanism allows to maintain ceramide levels at sufficient concentrations for the production of complex sphingolipids, but which prevents the accumulation of ceramides to levels that trigger apoptosis. Its function is as follows. Component of the serine palmitoyltransferase multisubunit enzyme (SPT) that catalyzes the initial and rate-limiting step in sphingolipid biosynthesis by condensing L-serine and activated acyl-CoA (most commonly palmitoyl-CoA) to form long-chain bases. The SPT complex is also composed of SPTLC2 or SPTLC3 and SPTSSA or SPTSSB. Within this complex, the heterodimer with SPTLC2 or SPTLC3 forms the catalytic core. The composition of the serine palmitoyltransferase (SPT) complex determines the substrate preference. The SPTLC1-SPTLC2-SPTSSA complex shows a strong preference for C16-CoA substrate, while the SPTLC1-SPTLC3-SPTSSA isozyme uses both C14-CoA and C16-CoA as substrates, with a slight preference for C14-CoA. The SPTLC1-SPTLC2-SPTSSB complex shows a strong preference for C18-CoA substrate, while the SPTLC1-SPTLC3-SPTSSB isozyme displays an ability to use a broader range of acyl-CoAs, without apparent preference. Required for adipocyte cell viability and metabolic homeostasis. The sequence is that of Serine palmitoyltransferase 1 (SPTLC1) from Macaca fascicularis (Crab-eating macaque).